Here is a 207-residue protein sequence, read N- to C-terminus: High frequency lysogenization protein HflD homolog (207 aa).

This sequence belongs to the HflD family.

The protein resides in the cytoplasm. It localises to the cell inner membrane. The chain is High frequency lysogenization protein HflD homolog from Azotobacter vinelandii (strain DJ / ATCC BAA-1303).